A 966-amino-acid chain; its full sequence is Next to BRCA1 gene 1 protein (966 aa).

One can recognise a PB1 domain in the interval 4 to 85 (QVTLNVTFKN…NQLQMQVHEG (82 aa)). Residue serine 116 is modified to Phosphoserine. The segment at 212–264 (SWHIACNNCQRRIVGVRYQCSLCPSYNICEDCEAGPYGHDTNHVLLKLRRPVV) adopts a ZZ-type zinc-finger fold. Zn(2+)-binding residues include cysteine 217, cysteine 220, cysteine 231, cysteine 234, cysteine 240, cysteine 243, histidine 250, and histidine 254. The ATG8 family protein-binding stretch occupies residues 542 to 636 (ASERELYIPS…KRKAENIASV (95 aa)). The residue at position 586 (threonine 586) is a Phosphothreonine; by GSK3-alpha. A phosphoserine mark is found at serine 590, serine 596, and serine 625. The span at 699–718 (EAVMEEEEDEEDEEEEDELK) shows a compositional bias: acidic residues. Disordered stretches follow at residues 699–728 (EAVM…SSAS), 750–792 (MYSS…QPQE), and 848–879 (VPDQ…HHGS). The ATG8 family protein-binding stretch occupies residues 727–738 (ASSEDYIIILPE). The UBA domain maps to 913–957 (SEDQTAALMAHLFEMGFCDRQLNLRLLKKHNYNILQVVTELLQLN).

As to quaternary structure, homooligomer and heterooligomer. Interacts with TRIM55. Interacts with titin/TTN. Interacts with RNF29, USP8, MAP1LC3A, MAP1LC3B, MAP1LC3C, GABARAP, GABARAPL1 and GABARAPL2. Binds to ubiquitin and ubiquitinated proteins. Interacts with SQSTM1. Interacts with TAX1BP1. Interacts with IRF3; this interaction mediates autophagic degradation of IRF3. Interacts with IL12A and IL12B. In terms of assembly, (Microbial infection) Interacts with Influenza A virus protein PB1; this interaction promotes NBR1-mediated selective autophagic degradation of MAVS. In terms of processing, (Microbial infection) Cleaved by S.pyogenes SpeB protease; leading to its degradation. Degradation by SpeB prevents autophagy, promoting to S.pyogenes intracellular replication. Post-translationally, phosphorylated by GSK3A; this phosphorylation inhibits NBR1 involvement in the formation of ubiquitinated protein aggregates.

The protein resides in the cytoplasm. It is found in the cytoplasmic vesicle. Its subcellular location is the autophagosome. The protein localises to the lysosome. It localises to the myofibril. The protein resides in the sarcomere. It is found in the m line. In terms of biological role, ubiquitin-binding autophagy adapter that participates in different processes including host defense or intracellular homeostasis. Possesses a double function during the selective autophagy by acting as a shuttle bringing ubiquitinated proteins to autophagosomes and also by participating in the formation of protein aggregates. Plays a role in the regulation of the innate immune response by modulating type I interferon production and targeting ubiquitinated IRF3 for autophagic degradation. In response to oxidative stress, promotes an increase in SQSTM1 levels, phosphorylation, and body formation by preventing its autophagic degradation. In turn, activates the KEAP1-NRF2/NFE2L2 antioxidant pathway. Also plays non-autophagy role by mediating the shuttle of IL-12 to late endosome for subsequent secretion. The chain is Next to BRCA1 gene 1 protein (NBR1) from Homo sapiens (Human).